The sequence spans 488 residues: Aspartyl/glutamyl-tRNA(Asn/Gln) amidotransferase subunit B (488 aa).

It belongs to the GatB/GatE family. GatB subfamily. In terms of assembly, heterotrimer of A, B and C subunits.

The enzyme catalyses L-glutamyl-tRNA(Gln) + L-glutamine + ATP + H2O = L-glutaminyl-tRNA(Gln) + L-glutamate + ADP + phosphate + H(+). The catalysed reaction is L-aspartyl-tRNA(Asn) + L-glutamine + ATP + H2O = L-asparaginyl-tRNA(Asn) + L-glutamate + ADP + phosphate + 2 H(+). Its function is as follows. Allows the formation of correctly charged Asn-tRNA(Asn) or Gln-tRNA(Gln) through the transamidation of misacylated Asp-tRNA(Asn) or Glu-tRNA(Gln) in organisms which lack either or both of asparaginyl-tRNA or glutaminyl-tRNA synthetases. The reaction takes place in the presence of glutamine and ATP through an activated phospho-Asp-tRNA(Asn) or phospho-Glu-tRNA(Gln). The chain is Aspartyl/glutamyl-tRNA(Asn/Gln) amidotransferase subunit B from Chlamydia trachomatis serovar L2 (strain ATCC VR-902B / DSM 19102 / 434/Bu).